Here is a 301-residue protein sequence, read N- to C-terminus: Heterogeneous nuclear ribonucleoprotein D-like (301 aa).

RRM domains follow at residues 29-111 and 114-193; these read GKMF…KGKE and KKVF…QPKE. Lysine 42 is subject to N6-methyllysine. Lysine 90 is covalently cross-linked (Glycyl lysine isopeptide (Lys-Gly) (interchain with G-Cter in SUMO2)). Residue lysine 97 is modified to N6-acetyllysine. Serine 122 carries the post-translational modification Phosphoserine. 2 disordered regions span residues 194–229 and 279–301; these read VYRQQQQQQKGGRGAAAGGRGGARGRGRGQGQNWNQ and GQQSTYGKASRGGGNHQNNYQPY. Residues 204–223 are compositionally biased toward gly residues; it reads GGRGAAAGGRGGARGRGRGQ. A necessary for interaction with TNPO1 region spans residues 223 to 301; sequence QGQNWNQGFN…GNHQNNYQPY (79 aa). Arginine 289 is modified (dimethylated arginine; alternate). Arginine 289 is modified (omega-N-methylarginine; alternate).

As to quaternary structure, interacts with TNPO1. Interacts with ZNF148. Dimethylation of Arg-289 is probably of the asymmetric type. As to expression, expressed in skeletal muscle, myoblast, myotube, heart, brain, liver, kidney, heart, lung, stomach, small intestine, large intestine, spleen, and testis (at protein level). Expressed in brain, skeletal muscle, heart, lung, liver, stomach, small intestine, large intestine, kidney, spleen and testis.

The protein resides in the nucleus. Its subcellular location is the cytoplasm. In terms of biological role, acts as a transcriptional regulator. Promotes transcription repression. Promotes transcription activation in differentiated myotubes. Binds to double- and single-stranded DNA sequences. Binds to the transcription suppressor CATR sequence of the COX5B promoter. Binds with high affinity to RNA molecules that contain AU-rich elements (AREs) found within the 3'-UTR of many proto-oncogenes and cytokine mRNAs. Binds both to nuclear and cytoplasmic poly(A) mRNAs. Binds to poly(G) and poly(A), but not to poly(U) or poly(C) RNA homopolymers. Binds to the 5'-ACUAGC-3' RNA consensus sequence. The protein is Heterogeneous nuclear ribonucleoprotein D-like (Hnrnpdl) of Mus musculus (Mouse).